Reading from the N-terminus, the 113-residue chain is Phosphorelay protein LuxU (113 aa).

One can recognise an HPt domain in the interval 18 to 113 (GEENVPILVN…THQCYSDLVH (96 aa)). Phosphohistidine is present on His-57.

In terms of assembly, monomer.

Its function is as follows. Phosphorelay protein which receives sensory signals from a sensory kinase and transmit them to LuxO. At low cell density, a phosphoryl group is transferred from the sensory kinase, probably on His-57 and this phosphoryl group is further transferred to LuxO. This Vibrio cholerae serotype O1 (strain ATCC 39315 / El Tor Inaba N16961) protein is Phosphorelay protein LuxU (luxU).